The chain runs to 172 residues: MAKHEIEERGDGLIEKMVAVNRVTKVVKGGRIMAFSALTVVGDGDGRIGMGKGKSKEVPVAVQKAMDQARRSMIKVPLKNGTIHHEVIGRHGATKVFMQPAKEGSGVKAGGPMRLVFDAMGIHNISAKVHGSTNPYNIVRATLDGLSKLHTPADIAAKRGLTVEDILGVNHG.

Residues 13–76 (LIEKMVAVNR…DQARRSMIKV (64 aa)) enclose the S5 DRBM domain.

It belongs to the universal ribosomal protein uS5 family. In terms of assembly, part of the 30S ribosomal subunit. Contacts proteins S4 and S8.

In terms of biological role, with S4 and S12 plays an important role in translational accuracy. Its function is as follows. Located at the back of the 30S subunit body where it stabilizes the conformation of the head with respect to the body. This Neisseria gonorrhoeae (strain ATCC 700825 / FA 1090) protein is Small ribosomal subunit protein uS5.